A 146-amino-acid polypeptide reads, in one-letter code: Hemoglobin subunit beta-2 (146 aa).

Residues 2–146 form the Globin domain; it reads HWTAEEKQLV…VAHALAYHYH (145 aa). Positions 63 and 92 each coordinate heme b.

The protein belongs to the globin family. There are three forms of hemoglobin in Sphenodon: A, A' and D. Hb A is a tetramer of two alpha-A and two beta-1, Hb A' is a tetramer of two alpha-a and two beta-2, Hb D is a tetramer of two alpha-D and two beta-2.

Functionally, involved in oxygen transport from the lung to the various peripheral tissues. This Sphenodon punctatus (Tuatara) protein is Hemoglobin subunit beta-2 (HBB2).